Consider the following 152-residue polypeptide: Nucleoside diphosphate kinase B (152 aa).

An interaction with AKAP13 region spans residues M1–K66. Positions 12, 60, 88, 94, 105, and 115 each coordinate ATP. H118 serves as the catalytic Pros-phosphohistidine intermediate.

This sequence belongs to the NDK family. As to quaternary structure, hexamer of two different chains: An and B (A6, A5B, A4B2, A3B3, A2B4, AB5, B6). Interacts with CAPN8. Interacts with AKAP13. Interacts with ITGB1BP1 (via C-terminal domain region). Interacts with BCL2L10. Mg(2+) serves as cofactor.

It is found in the cytoplasm. The protein localises to the cell projection. Its subcellular location is the lamellipodium. It localises to the ruffle. The protein resides in the nucleus. It carries out the reaction a 2'-deoxyribonucleoside 5'-diphosphate + ATP = a 2'-deoxyribonucleoside 5'-triphosphate + ADP. It catalyses the reaction a ribonucleoside 5'-diphosphate + ATP = a ribonucleoside 5'-triphosphate + ADP. The enzyme catalyses ATP + protein L-histidine = ADP + protein N-phospho-L-histidine.. Its function is as follows. Major role in the synthesis of nucleoside triphosphates other than ATP. The ATP gamma phosphate is transferred to the NDP beta phosphate via a ping-pong mechanism, using a phosphorylated active-site intermediate. Negatively regulates Rho activity by interacting with AKAP13/LBC. Acts as a transcriptional activator of the MYC gene; binds DNA non-specifically. Binds to both single-stranded guanine- and cytosine-rich strands within the nuclease hypersensitive element (NHE) III(1) region of the MYC gene promoter. Does not bind to duplex NHE III(1). Has G-quadruplex (G4) DNA-binding activity, which is independent of its nucleotide-binding and kinase activity. Binds both folded and unfolded G4 with similar low nanomolar affinities. Stabilizes folded G4s regardless of whether they are prefolded or not. Exhibits histidine protein kinase activity. In Pongo abelii (Sumatran orangutan), this protein is Nucleoside diphosphate kinase B (NME2).